The chain runs to 108 residues: V-type proton ATPase subunit G (108 aa).

Residues 48 to 60 show a composition bias toward basic and acidic residues; the sequence is YASKKEEEFKKSE. The segment at 48-89 is disordered; it reads YASKKEEEFKKSESQASGIYSQAEAESKKQVQDTFASIETSS. The span at 79-89 shows a compositional bias: polar residues; it reads QDTFASIETSS.

Belongs to the V-ATPase G subunit family. In terms of assembly, V-ATPase is a heteromultimeric enzyme composed of a peripheral catalytic V1 complex (components A to H) attached to an integral membrane V0 proton pore complex (components: a, c, c', c'', d, e, f and VOA1).

The protein resides in the vacuole membrane. In terms of biological role, subunit of the V1 complex of vacuolar(H+)-ATPase (V-ATPase), a multisubunit enzyme composed of a peripheral complex (V1) that hydrolyzes ATP and a membrane integral complex (V0) that translocates protons. V-ATPase is responsible for acidifying and maintaining the pH of intracellular compartments. In Schizosaccharomyces pombe (strain 972 / ATCC 24843) (Fission yeast), this protein is V-type proton ATPase subunit G (vma10).